The chain runs to 127 residues: Fluoride-specific ion channel FluC (127 aa).

4 helical membrane passes run 4-24, 35-55, 71-91, and 103-123; these read LLLA…FLSM, LGTL…LAWF, TGFC…VFLL, and IAVN…LFSA. Na(+) is bound by residues G75 and T78.

The protein belongs to the fluoride channel Fluc/FEX (TC 1.A.43) family.

The protein resides in the cell inner membrane. The catalysed reaction is fluoride(in) = fluoride(out). With respect to regulation, na(+) is not transported, but it plays an essential structural role and its presence is essential for fluoride channel function. Functionally, fluoride-specific ion channel. Important for reducing fluoride concentration in the cell, thus reducing its toxicity. The chain is Fluoride-specific ion channel FluC from Enterobacter sp. (strain 638).